We begin with the raw amino-acid sequence, 315 residues long: beta-hydroxyaspartate dehydratase (315 aa).

Residue Lys-53 is modified to N6-(pyridoxal phosphate)lysine. Pyridoxal 5'-phosphate contacts are provided by residues Asn-80, 179–183 (GGGGM), and Thr-303.

It depends on pyridoxal 5'-phosphate as a cofactor.

It catalyses the reaction (3S)-3-hydroxy-D-aspartate = iminosuccinate + H2O. Catalyzes the dehydration of (2R,3S)-beta-hydroxyaspartate ((3S)-3-hydroxy-D-aspartate) into iminosuccinate. Is essential for the growth of P.denitrificans in the presence of glycolate and glyoxylate since it functions in glyoxylate assimilation via the beta-hydroxyaspartate cycle (BHAC). The sequence is that of beta-hydroxyaspartate dehydratase from Paracoccus denitrificans (strain Pd 1222).